Here is a 256-residue protein sequence, read N- to C-terminus: Type III pantothenate kinase (256 aa).

Residue Asp-6–Val-13 participates in ATP binding. Substrate-binding positions include Tyr-101 and Gly-108–Arg-111. The active-site Proton acceptor is Asp-110. Asp-130 is a binding site for K(+). Thr-133 serves as a coordination point for ATP. Residue Thr-185 coordinates substrate.

The protein belongs to the type III pantothenate kinase family. As to quaternary structure, homodimer. Requires NH4(+) as cofactor. K(+) is required as a cofactor.

It localises to the cytoplasm. It carries out the reaction (R)-pantothenate + ATP = (R)-4'-phosphopantothenate + ADP + H(+). Its pathway is cofactor biosynthesis; coenzyme A biosynthesis; CoA from (R)-pantothenate: step 1/5. Its function is as follows. Catalyzes the phosphorylation of pantothenate (Pan), the first step in CoA biosynthesis. The polypeptide is Type III pantothenate kinase (Shouchella clausii (strain KSM-K16) (Alkalihalobacillus clausii)).